The following is a 282-amino-acid chain: uncharacterized protein (282 aa).

Belongs to the ycf80 family.

It is found in the plastid. Its subcellular location is the chloroplast. This is an uncharacterized protein from Guillardia theta (Cryptophyte).